The following is a 288-amino-acid chain: ATP synthase gamma chain (288 aa).

This sequence belongs to the ATPase gamma chain family. In terms of assembly, F-type ATPases have 2 components, CF(1) - the catalytic core - and CF(0) - the membrane proton channel. CF(1) has five subunits: alpha(3), beta(3), gamma(1), delta(1), epsilon(1). CF(0) has three main subunits: a, b and c.

It is found in the cell inner membrane. Its function is as follows. Produces ATP from ADP in the presence of a proton gradient across the membrane. The gamma chain is believed to be important in regulating ATPase activity and the flow of protons through the CF(0) complex. This is ATP synthase gamma chain from Blochmanniella floridana.